Reading from the N-terminus, the 161-residue chain is Ubiquitin D (161 aa).

Ubiquitin-like domains are found at residues 3 to 77 and 86 to 159; these read SCVC…LKVV and LSLV…AHCI.

The protein belongs to the ubiquitin D family. In terms of assembly, interacts directly with the 26S proteasome. Interacts with NUB1; this interaction facilitates the linking of UBD-conjugated target protein to the proteasome complex and accelerates its own degradation and that of its conjugates. Interacts (via ubiquitin-like 1 domain) with the spindle checkpoint protein MAD2L1 during mitosis. Present in aggresomes of proteasome inhibited cells. Interacts with HDAC6 under proteasome impairment conditions. Forms a thioester with UBA6 in cells stimulated with tumor necrosis factor-alpha (TNFa) and interferon-gamma (IFNg). Interacts with SQSTM1 and TP53/p53. Post-translationally, can be acetylated.

The protein resides in the nucleus. It localises to the cytoplasm. Functionally, ubiquitin-like protein modifier which can be covalently attached to target proteins and subsequently leads to their degradation by the 26S proteasome, in a NUB1-dependent manner. Conjugation to the target protein is activated by UBA6 via adenylation of its C-terminal glycine. Probably functions as a survival factor. Promotes the expression of the proteasome subunit beta type-9 (PSMB9/LMP2). Regulates TNF-alpha-induced and LPS-mediated activation of the central mediator of innate immunity NF-kappa-B by promoting TNF-alpha-mediated proteasomal degradation of ubiquitinated-I-kappa-B-alpha. Required for TNF-alpha-induced p65 nuclear translocation in renal tubular epithelial cells (RTECs). May be involved in dendritic cell (DC) maturation, the process by which immature dendritic cells differentiate into fully competent antigen-presenting cells that initiate T-cell responses. Mediates mitotic non-disjunction and chromosome instability, in long-term in vitro culture and cancers, by abbreviating mitotic phase and impairing the kinetochore localization of MAD2L1 during the prometaphase stage of the cell cycle. May be involved in the formation of aggresomes when proteasome is saturated or impaired. Mediates apoptosis in a caspase-dependent manner, especially in renal epithelium and tubular cells during renal diseases. The sequence is that of Ubiquitin D (Ubd) from Rattus norvegicus (Rat).